The sequence spans 232 residues: UPF0502 protein mma_2112 (232 aa).

Belongs to the UPF0502 family.

This Janthinobacterium sp. (strain Marseille) (Minibacterium massiliensis) protein is UPF0502 protein mma_2112.